The primary structure comprises 155 residues: Small ribosomal subunit protein uS7c (155 aa).

This sequence belongs to the universal ribosomal protein uS7 family. In terms of assembly, part of the 30S ribosomal subunit.

It localises to the plastid. The protein localises to the chloroplast. Its function is as follows. One of the primary rRNA binding proteins, it binds directly to 16S rRNA where it nucleates assembly of the head domain of the 30S subunit. This chain is Small ribosomal subunit protein uS7c (rps7), found in Marchantia polymorpha (Common liverwort).